The following is a 55-amino-acid chain: MASSTDVRPKITLACEVCKHRNYITKKNRRNDPDRLELKKFCPNCGVHRAHKESR.

This sequence belongs to the bacterial ribosomal protein bL33 family.

The protein is Large ribosomal subunit protein bL33A of Mycobacterium sp. (strain JLS).